The following is a 155-amino-acid chain: DNA gyrase inhibitor (155 aa).

It belongs to the DNA gyrase inhibitor family. Interacts with DNA gyrase.

The protein localises to the cytoplasm. Its function is as follows. Inhibits the supercoiling activity of DNA gyrase. Acts by inhibiting DNA gyrase at an early step, prior to (or at the step of) binding of DNA by the gyrase. It protects cells against toxins that target DNA gyrase, by inhibiting activity of these toxins and reducing the formation of lethal double-strand breaks in the cell. The chain is DNA gyrase inhibitor from Erwinia billingiae (strain Eb661).